Reading from the N-terminus, the 140-residue chain is PDZ domain-containing protein 11 (140 aa).

The region spanning 47–129 (TITLKKPPGA…ISMRVRFFPY (83 aa)) is the PDZ domain.

As to quaternary structure, interacts with ATP2B1, ATP2B2, ATP2B3, ATP2B4 and ATP7A. Interacts with PLEKHA7 (via WW domains) at zonula adherens; this interaction is essential for the interaction between PLEKHA7 and the ADAM10-binding protein TSPAN33. Interacts with SLC5A6. Widely expressed (at protein level).

The protein resides in the secreted. Its subcellular location is the cytoplasm. The protein localises to the cell junction. It localises to the adherens junction. It is found in the cell membrane. Functionally, mediates docking of ADAM10 to zonula adherens by interacting with PLEKHA7 which is required for PLEKHA7 to interact with the ADAM10-binding protein TSPAN33. This is PDZ domain-containing protein 11 (PDZD11) from Homo sapiens (Human).